The chain runs to 138 residues: Protein Turandot B (138 aa).

The signal sequence occupies residues 1 to 21 (MNFKTSLICFALLLIGTLCSA).

The protein belongs to the Turandot family.

It localises to the secreted. A humoral factor that may play a role in stress tolerance. The chain is Protein Turandot B from Drosophila melanogaster (Fruit fly).